A 423-amino-acid chain; its full sequence is Galactosylceramide sulfotransferase (423 aa).

The Cytoplasmic segment spans residues 1–12 (MTLLPKKPCKSK). The helical; Signal-anchor for type II membrane protein transmembrane segment at 13–35 (AKGLLLGALFTSFLLLLYSYVVP) threads the bilayer. Over 36–423 (PLYPNMAFTT…WKFLRDFLRW (388 aa)) the chain is Lumenal. N-linked (GlcNAc...) asparagine glycans are attached at residues N66 and N312.

The protein belongs to the galactose-3-O-sulfotransferase family. As to expression, expressed in brain, testis, kidney, stomach, small intestine, liver, and lung. Not detected in heart, skeletal muscle, and spleen.

It localises to the golgi apparatus membrane. It carries out the reaction a beta-D-galactosyl-(1&lt;-&gt;1')-N-acylsphing-4-enine + 3'-phosphoadenylyl sulfate = an N-acyl-1-beta-D-(3-O-sulfo)-galactosyl-sphing-4-enine + adenosine 3',5'-bisphosphate + H(+). It catalyses the reaction a 1-O-alkyl-2-acyl-3-O-(beta-D-galactosyl)-sn-glycerol + 3'-phosphoadenylyl sulfate = a 1-O-alkyl-2-acyl-3-(beta-D-3-sulfogalactosyl)-sn-glycerol + adenosine 3',5'-bisphosphate + H(+). The catalysed reaction is a beta-D-Gal-(1&lt;-&gt;1')-ceramide + 3'-phosphoadenylyl sulfate = 1-(3-O-sulfo-beta-D-galactosyl)-ceramide + adenosine 3',5'-bisphosphate + H(+). The enzyme catalyses a 1,2-diacyl-3-O-(beta-D-galactosyl)-sn-glycerol + 3'-phosphoadenylyl sulfate = 1,2-diacyl-3-(3-O-sulfo-beta-D-galactosyl)-sn-glycerol + adenosine 3',5'-bisphosphate + H(+). It carries out the reaction a beta-D-Gal-(1-&gt;4)-beta-D-Glc-(1&lt;-&gt;1)-Cer(d18:1(4E)) + 3'-phosphoadenylyl sulfate = beta-D-3-sulfogalactosyl-(1-&gt;4)-beta-D-glucosyl-(1&lt;-&gt;1')-N-acylsphing-4-enine + adenosine 3',5'-bisphosphate + H(+). The protein operates within lipid metabolism; sphingolipid metabolism. Its function is as follows. Catalyzes the transfer of a sulfate group to position 3 of non-reducing beta-galactosyl residues in glycerolipids and sphingolipids, therefore participates in the biosynthesis of sulfoglycolipids. Catalyzes the synthesis of galactosylceramide sulfate (sulfatide), a major lipid component of the myelin sheath and of monogalactosylalkylacylglycerol sulfate (seminolipid), present in spermatocytes. Seems to prefer beta-glycosides at the non-reducing termini of sugar chains attached to a lipid moiety. Also acts on lactosylceramide, galactosyl 1-alkyl-2-sn-glycerol and galactosyl diacylglycerol (in vitro). This chain is Galactosylceramide sulfotransferase, found in Mus musculus (Mouse).